A 626-amino-acid chain; its full sequence is MSDPVRITNPGAESLGYDSDGHEIMAVDIYVNPPRVDVFHGTPPAWSSFGNKTIWGGNEWVDDSPTRSDIEKRDKEITAYKNTLSAQQKENENKRTEAGKRLSAAIAAREKDENTLKTLRAGNADAADITRQEFRLLQAELREYGFRTEIAGYDALRLHTESRMLFADADSLRISPREARSLIEQAEKRQKDAQNADKKAADMLAEYERRKGILDTRLSELEKNGGAALAVLDAQQARLLGQQTRNDRAISEARNKLSSVTESLNTARNALTRAEQQLTQQKNTPDGKTIVSPEKFPGRSSTNHSIVVSGDPRFAGTIKITTSAVIDNRANLNYLLSHSGLDYKRNILNDRNPVVTEDVEGDKKIYNAEVAEWDKLRQRLLDARNKITSAESAVNSARNNLSARTNEQKHANDALNALLKEKENIRNQLSGINQKIAEEKRKQDELKATKDAINFTTEFLKSVSEKYGAKAEQLAREMAGQAKGKKIRNVEEALKTYEKYRADINKKINAKDRAAIAAALESVKLSDISSNLNRFSRGLGYAGKFTSLADWITEFGKAVRTENWRPLFVKTETIIAGNAATALVALVFSILTGSALGIIGYGLLMAVTGALIDESLVEKANKFWGI.

The segment at 23–225 (EIMAVDIYVN…TRLSELEKNG (203 aa)) is translocation (T). Over residues 276–286 (QQLTQQKNTPD) the composition is skewed to polar residues. Positions 276-308 (QQLTQQKNTPDGKTIVSPEKFPGRSSTNHSIVV) are disordered. Residues 282–385 (KNTPDGKTIV…LRQRLLDARN (104 aa)) are receptor-binding (R). Residues 450–626 (KDAINFTTEF…VEKANKFWGI (177 aa)) are channel (C). 2 consecutive transmembrane segments (helical) span residues 580 to 594 (ATALVALVFSILTGS) and 597 to 612 (GIIGYGLLMAVTGALI).

It belongs to the channel forming colicin family.

It is found in the cell membrane. Functionally, this colicin is a channel-forming colicin. This class of transmembrane toxins depolarize the cytoplasmic membrane, leading to dissipation of cellular energy. Its function is as follows. Colicins are polypeptide toxins produced by and active against E.coli and closely related bacteria. The sequence is that of Colicin-Ia (cia) from Escherichia coli.